Reading from the N-terminus, the 253-residue chain is 5-oxoprolinase subunit A (253 aa).

Belongs to the LamB/PxpA family. In terms of assembly, forms a complex composed of PxpA, PxpB and PxpC.

The catalysed reaction is 5-oxo-L-proline + ATP + 2 H2O = L-glutamate + ADP + phosphate + H(+). Functionally, catalyzes the cleavage of 5-oxoproline to form L-glutamate coupled to the hydrolysis of ATP to ADP and inorganic phosphate. The chain is 5-oxoprolinase subunit A from Bacillus cereus (strain AH187).